Reading from the N-terminus, the 89-residue chain is Large ribosomal subunit protein bL27 (89 aa).

Residues 1-24 (MAHKKGTGSTRNGRDSRSQRLGVK) form a disordered region.

Belongs to the bacterial ribosomal protein bL27 family.

This is Large ribosomal subunit protein bL27 from Microcystis aeruginosa (strain NIES-843 / IAM M-2473).